The chain runs to 957 residues: Serine-aspartate repeat-containing protein C (957 aa).

Positions Met1–Ala50 are cleaved as a signal peptide. The segment at Ala51–Arg166 is disordered. A ligand binding A region region spans residues Ala51 to Lys495. A compositionally biased stretch (polar residues) spans Gly56–Asn71. Positions Lys72–Lys83 are enriched in basic and acidic residues. Positions Asp84–Pro114 are enriched in polar residues. Over residues Gln115–Asn132 the composition is skewed to low complexity. The span at Asp133–Lys164 shows a compositional bias: polar residues. 2 CNA-B domains span residues Lys496 to Pro606 and Lys607 to Thr717. Positions Thr678–Gly937 are disordered. 2 stretches are compositionally biased toward acidic residues: residues Thr685–Glu695 and Tyr712–Ser896. Positions Leu920–Gly924 match the LPXTG sorting signal motif. Residues Glu922–Gly937 show a composition bias toward low complexity. Position 923 is a pentaglycyl murein peptidoglycan amidated threonine (Thr923). Positions Gly924–Lys957 are cleaved as a propeptide — removed by sortase.

Belongs to the serine-aspartate repeat-containing protein (SDr) family. Homodimerizes; via N2-Domain. Interacts with host NRXN1; this interaction mediates bacterial attachment to host cells.

It is found in the secreted. The protein localises to the cell wall. Functionally, cell surface-associated calcium-binding protein which plays an important role in adhesion and pathogenesis. Mediates interactions with components of the extracellular matrix such as host NRXN1 to promote bacterial adhesion. The sequence is that of Serine-aspartate repeat-containing protein C (sdrC) from Staphylococcus aureus (strain MSSA476).